The chain runs to 1283 residues: Rab11 family-interacting protein 1 (1283 aa).

The region spanning 1–126 (MSLMVSAGRG…DQGRRKTQWY (126 aa)) is the C2 domain. Positions 161 to 185 (SMKDKSRNPFGKLKDKIKGKNKDSG) are enriched in basic and acidic residues. Positions 161 to 281 (SMKDKSRNPF…VMSHKRTAST (121 aa)) are disordered. Phosphoserine occurs at positions 184, 202, 206, and 234. Over residues 225 to 239 (NLQKTPLSQSMSVLP) the composition is skewed to polar residues. The segment covering 257–266 (WDEDDNEDES) has biased composition (acidic residues). Residues Ser-300, Ser-315, Ser-339, Ser-341, Ser-343, Ser-345, Ser-356, Ser-357, and Ser-382 each carry the phosphoserine modification. 5 disordered regions span residues 330–727 (EAKG…QEVP), 741–782 (VGEL…ASVP), 835–913 (PQEL…LFRM), 969–993 (DERI…KSST), and 1037–1141 (ASVT…RVEN). A compositionally biased stretch (basic and acidic residues) spans 419–433 (ATKEAKESKKPESRR). Ser-435 carries the post-translational modification Phosphoserine. Basic and acidic residues predominate over residues 442 to 451 (GKKDVAKGSE). Ser-477 carries the phosphoserine modification. Residues 482-491 (DLVRRSEKDT) are compositionally biased toward basic and acidic residues. Residues Ser-529 and Ser-545 each carry the phosphoserine modification. Positions 588 to 612 (SSESPSVFSSLSSPIAAPISTSTPI) are enriched in low complexity. A compositionally biased stretch (polar residues) spans 637–652 (QTESLTPVPNSGSSAL). Residues 698–715 (ETGRQEEELPRFPCKKQD) show a composition bias toward basic and acidic residues. Position 758 is a phosphoserine (Ser-758). Positions 855 to 866 (ESPHAEDSERES) are enriched in basic and acidic residues. Residues 975–986 (VEDDGDQVEDDG) are compositionally biased toward acidic residues. Polar residues predominate over residues 1037–1048 (ASVTAPSEQTTE). The span at 1116-1131 (SDTHHTSTAESQKKAT) shows a compositional bias: basic and acidic residues. Residue Ser-1135 is modified to Phosphoserine. Positions 1211 to 1273 (KKYSPSDPAF…EETPNILRIP (63 aa)) constitute an FIP-RBD domain. The tract at residues 1219–1283 (AFAYAQLTHD…TQVGKKAGKM (65 aa)) is necessary for interaction with RAB4A and RAB11A, subcellular location and endosomal recycling.

Interacts with RAB11A (GTP-bound form); the interaction induces RAB11FIP1 recruitment to membranes. Interacts with RAB14 (GTP-bound form). As to quaternary structure, homooligomer. Isoform 2 interacts with RAB4A, RAB11A, RAB11B and RAB25. According to PubMed:15280022, RAB4A binding to RAB11FIP1 is of very low affinity in vitro and in vivo. Isoform 2 is expressed in brain, heart, testis, lung, spleen, ovary and small intestine.

It localises to the recycling endosome. It is found in the cytoplasmic vesicle. Its subcellular location is the phagosome membrane. Its function is as follows. A Rab11 effector protein involved in the endosomal recycling process. Also involved in controlling membrane trafficking along the phagocytic pathway and in phagocytosis. Interaction with RAB14 may function in the process of neurite formation. This is Rab11 family-interacting protein 1 from Homo sapiens (Human).